We begin with the raw amino-acid sequence, 360 residues long: Membrane-bound lytic murein transglycosylase C (360 aa).

Residues 1–16 (MKKLLALAVIAPLLIS) form the signal peptide. Residue C17 is the site of N-palmitoyl cysteine attachment. Residue C17 is the site of S-diacylglycerol cysteine attachment.

Belongs to the transglycosylase Slt family.

The protein resides in the cell outer membrane. The catalysed reaction is Exolytic cleavage of the (1-&gt;4)-beta-glycosidic linkage between N-acetylmuramic acid (MurNAc) and N-acetylglucosamine (GlcNAc) residues in peptidoglycan, from either the reducing or the non-reducing ends of the peptidoglycan chains, with concomitant formation of a 1,6-anhydrobond in the MurNAc residue.. In terms of biological role, murein-degrading enzyme. May play a role in recycling of muropeptides during cell elongation and/or cell division. The sequence is that of Membrane-bound lytic murein transglycosylase C from Salmonella typhi.